Consider the following 110-residue polypeptide: Chorion class B protein M2410 (110 aa).

A run of 4 repeats spans residues 1 to 4, 5 to 9, 10 to 14, and 15 to 19. Residues 1–19 form a 4 X 5 AA tandem repeats of G-Y-G-G-L region; it reads YGGLGYGGLGYGGLGYGGL. The tract at residues 1 to 27 is left arm; the sequence is YGGLGYGGLGYGGLGYGGLGGGCGRGF. Positions 28-96 are central domain; the sequence is SGGGLPVATA…GNGDVGITRE (69 aa). The right arm (Gly-rich tandem repeats) stretch occupies residues 97–110; the sequence is GGLGYGAGYGGGYG.

It belongs to the chorion protein family.

This protein is one of many from the eggshell of the silk moth. The chain is Chorion class B protein M2410 from Bombyx mori (Silk moth).